We begin with the raw amino-acid sequence, 116 residues long: Flagellar transcriptional regulator FlhD (116 aa).

The protein belongs to the FlhD family. As to quaternary structure, homodimer; disulfide-linked. Forms a heterohexamer composed of two FlhC and four FlhD subunits. Each FlhC binds a FlhD dimer, forming a heterotrimer, and a hexamer assembles by dimerization of two heterotrimers.

The protein resides in the cytoplasm. In terms of biological role, functions in complex with FlhC as a master transcriptional regulator that regulates transcription of several flagellar and non-flagellar operons by binding to their promoter region. Activates expression of class 2 flagellar genes, including fliA, which is a flagellum-specific sigma factor that turns on the class 3 genes. Also regulates genes whose products function in a variety of physiological pathways. In Pantoea ananatis (strain LMG 20103), this protein is Flagellar transcriptional regulator FlhD.